Consider the following 270-residue polypeptide: Putative phosphoenolpyruvate synthase regulatory protein (270 aa).

An ADP-binding site is contributed by 151–158 (GVSRCGKT).

It belongs to the pyruvate, phosphate/water dikinase regulatory protein family. PSRP subfamily.

The enzyme catalyses [pyruvate, water dikinase] + ADP = [pyruvate, water dikinase]-phosphate + AMP + H(+). It catalyses the reaction [pyruvate, water dikinase]-phosphate + phosphate + H(+) = [pyruvate, water dikinase] + diphosphate. Functionally, bifunctional serine/threonine kinase and phosphorylase involved in the regulation of the phosphoenolpyruvate synthase (PEPS) by catalyzing its phosphorylation/dephosphorylation. In Methylobacillus flagellatus (strain ATCC 51484 / DSM 6875 / VKM B-1610 / KT), this protein is Putative phosphoenolpyruvate synthase regulatory protein.